The primary structure comprises 389 residues: Phosphopentomutase (389 aa).

Mn(2+)-binding residues include Asp12, Asp284, His289, Asp325, His326, and His337.

Belongs to the phosphopentomutase family. Mn(2+) serves as cofactor.

Its subcellular location is the cytoplasm. It carries out the reaction 2-deoxy-alpha-D-ribose 1-phosphate = 2-deoxy-D-ribose 5-phosphate. The catalysed reaction is alpha-D-ribose 1-phosphate = D-ribose 5-phosphate. Its pathway is carbohydrate degradation; 2-deoxy-D-ribose 1-phosphate degradation; D-glyceraldehyde 3-phosphate and acetaldehyde from 2-deoxy-alpha-D-ribose 1-phosphate: step 1/2. In terms of biological role, isomerase that catalyzes the conversion of deoxy-ribose 1-phosphate (dRib-1-P) and ribose 1-phosphate (Rib-1-P) to deoxy-ribose 5-phosphate (dRib-5-P) and ribose 5-phosphate (Rib-5-P), respectively. The protein is Phosphopentomutase of Anaeromyxobacter sp. (strain Fw109-5).